The chain runs to 106 residues: MTASLTQQKIRIRLKAFDRRMLDLSCDKIIQTADTTAASAIGPIPLPTKRKIYCVLRSPHVDKDSREHFETRTHRRIIDIYSPSAKTIDALMKLDLPSGVDIEVKL.

It belongs to the universal ribosomal protein uS10 family. As to quaternary structure, part of the 30S ribosomal subunit.

In terms of biological role, involved in the binding of tRNA to the ribosomes. This is Small ribosomal subunit protein uS10 from Prochlorococcus marinus subsp. pastoris (strain CCMP1986 / NIES-2087 / MED4).